The primary structure comprises 243 residues: Clathrin light chain A (243 aa).

The residue at position 1 (Met1) is a Blocked amino end (Met). Disordered regions lie at residues 1-22 and 49-87; these read MAEL…GVAG and ILDG…GPTD. A compositionally biased stretch (gly residues) spans 10-20; it reads PAGGPALGNGV. Residues 95 to 157 are involved in binding clathrin heavy chain; that stretch reads VDRLQSEPES…QLQKTKANNR (63 aa). Ser100 and Ser201 each carry phosphoserine. Lys218 is subject to N6-acetyllysine. Ser231 bears the Phosphoserine mark. Lys237 bears the N6-acetyllysine mark.

The protein belongs to the clathrin light chain family. As to quaternary structure, clathrin coats are formed from molecules containing 3 heavy chains and 3 light chains. Interacts with CALY; the interaction stimulates clathrin self-assembly and clathrin-mediated endocytosis. Interacts with CKAP5 and TACC3 forming the TACC3/ch-TOG/clathrin complex located at spindle inter-microtubules bridges; the complex implicates clathrin triskelions.

It is found in the cytoplasmic vesicle membrane. The protein localises to the membrane. It localises to the coated pit. The protein resides in the cytoplasm. Its subcellular location is the cytoskeleton. It is found in the spindle. Its function is as follows. Clathrin is the major protein of the polyhedral coat of coated pits and vesicles. Acts as a component of the TACC3/ch-TOG/clathrin complex proposed to contribute to stabilization of kinetochore fibers of the mitotic spindle by acting as inter-microtubule bridge. In Bos taurus (Bovine), this protein is Clathrin light chain A (CLTA).